The primary structure comprises 468 residues: Glutamine synthetase (468 aa).

In terms of domain architecture, GS beta-grasp spans 14–98; sequence HDVKYVDLRF…ILCDVYEPST (85 aa). A GS catalytic domain is found at 106 to 468; that stretch reads PRGIAKAAEK…PIEYKMYYSV (363 aa). Mg(2+) is bound by residues glutamate 131 and glutamate 133. Residue glutamate 209 participates in ATP binding. Glutamate 214 and glutamate 221 together coordinate Mg(2+). L-glutamate is bound by residues 265 to 266 and glycine 266; that span reads NG. Residue histidine 270 coordinates Mg(2+). Residues 272–274 and serine 274 each bind ATP; that span reads HQS. 3 residues coordinate L-glutamate: arginine 322, glutamate 328, and arginine 340. Residues arginine 340, arginine 345, and lysine 353 each contribute to the ATP site. Residue glutamate 358 coordinates Mg(2+). Position 360 (arginine 360) interacts with L-glutamate. Tyrosine 398 is subject to O-AMP-tyrosine.

This sequence belongs to the glutamine synthetase family. Oligomer of 12 subunits arranged in the form of two hexameric ring. It depends on Mg(2+) as a cofactor.

It localises to the cytoplasm. It carries out the reaction L-glutamate + NH4(+) + ATP = L-glutamine + ADP + phosphate + H(+). The activity of this enzyme could be controlled by adenylation under conditions of abundant glutamine. In terms of biological role, catalyzes the ATP-dependent biosynthesis of glutamine from glutamate and ammonia. This Azospirillum brasilense protein is Glutamine synthetase.